We begin with the raw amino-acid sequence, 127 residues long: Large ribosomal subunit protein bL20 (127 aa).

The protein belongs to the bacterial ribosomal protein bL20 family.

Functionally, binds directly to 23S ribosomal RNA and is necessary for the in vitro assembly process of the 50S ribosomal subunit. It is not involved in the protein synthesizing functions of that subunit. The sequence is that of Large ribosomal subunit protein bL20 from Akkermansia muciniphila (strain ATCC BAA-835 / DSM 22959 / JCM 33894 / BCRC 81048 / CCUG 64013 / CIP 107961 / Muc).